The primary structure comprises 476 residues: Protein transport protein Sec61 subunit alpha isoform 2 (476 aa).

Topologically, residues 1–32 (MGIKFLEVIKPFCAVLPEIQKPERKIQFREKV) are cytoplasmic. A helical transmembrane segment spans residues 33–53 (LWTAITLFIFLVCCQIPLFGI). Over 54–75 (MSSDSADPFYWMRVILASNRGT) the chain is Lumenal. The helical transmembrane segment at 76-96 (LMELGISPIVTSGLIMQLLAG) threads the bilayer. Residues 97–117 (AKIIEVGDTPKDRALFNGAQK) are Cytoplasmic-facing. Residues 118–138 (LFGMIITIGQAIVYVMTGMYG) traverse the membrane as a helical segment. Topologically, residues 139 to 144 (DPAEMG) are lumenal. A helical transmembrane segment spans residues 145–165 (AGICLLIIIQLFVAGLIVLLL). The Cytoplasmic segment spans residues 166–172 (DELLQKG). The helical transmembrane segment at 173–193 (YGLGSGISLFIATNICETIVW) threads the bilayer. The Lumenal portion of the chain corresponds to 194 to 240 (KASSPTTINTGRGTEFEGAVIALFHLLATRTDKVRALREAFYRQNLP). Residues 241 to 261 (NLMNLIATVFVFAVVIYFQGF) traverse the membrane as a helical segment. Residues 262-288 (RVDLPIKSARYRGQYSSYPIKLFYTSN) are Cytoplasmic-facing. Residues 289-309 (IPIILQSALVSNLYVISQMLS) traverse the membrane as a helical segment. Topologically, residues 310 to 353 (VRFSGNFLVNLLGQWADVSGGGPARSYPVGGLCYYLSPPESMGA) are lumenal. A helical membrane pass occupies residues 354-374 (ILEDPVHVVVYIIFMLGSCAF). Over 375–420 (FSKTWIEVSGSSAKDVAKQLKEQQMVMRGHRDTSMVHELNRYIPTA) the chain is Cytoplasmic. The next 2 membrane-spanning stretches (helical) occupy residues 421–441 (AAFG…LGAI) and 442–462 (GSGT…EIFV). The Cytoplasmic portion of the chain corresponds to 463 to 476 (KEQAEVGGMGALFF).

Belongs to the SecY/SEC61-alpha family. The SEC61 channel-forming translocon complex consists of channel-forming core components SEC61A1, SEC61B and SEC61G and different auxiliary components such as SEC62 and SEC63.

The protein localises to the endoplasmic reticulum membrane. Component of SEC61 channel-forming translocon complex that mediates transport of signal peptide-containing precursor polypeptides across the endoplasmic reticulum (ER). Forms a ribosome receptor and a gated pore in the ER membrane, both functions required for cotranslational translocation of nascent polypeptides. In Pongo abelii (Sumatran orangutan), this protein is Protein transport protein Sec61 subunit alpha isoform 2 (SEC61A2).